The chain runs to 517 residues: Maturase K (517 aa).

This sequence belongs to the intron maturase 2 family. MatK subfamily.

The protein resides in the plastid. Its subcellular location is the chloroplast. Its function is as follows. Usually encoded in the trnK tRNA gene intron. Probably assists in splicing its own and other chloroplast group II introns. The chain is Maturase K from Trillium grandiflorum (Large-flowered trillium).